The sequence spans 74 residues: UPF0154 protein LVIS_1358 (74 aa).

Residues 4-24 (WIWILIVIVVGLACAAGGFYG) traverse the membrane as a helical segment.

Belongs to the UPF0154 family.

It is found in the cell membrane. In Levilactobacillus brevis (strain ATCC 367 / BCRC 12310 / CIP 105137 / JCM 1170 / LMG 11437 / NCIMB 947 / NCTC 947) (Lactobacillus brevis), this protein is UPF0154 protein LVIS_1358.